Reading from the N-terminus, the 117-residue chain is Large ribosomal subunit protein uL18 (117 aa).

Belongs to the universal ribosomal protein uL18 family. In terms of assembly, part of the 50S ribosomal subunit; part of the 5S rRNA/L5/L18/L25 subcomplex. Contacts the 5S and 23S rRNAs.

Functionally, this is one of the proteins that bind and probably mediate the attachment of the 5S RNA into the large ribosomal subunit, where it forms part of the central protuberance. The chain is Large ribosomal subunit protein uL18 from Laribacter hongkongensis (strain HLHK9).